A 143-amino-acid chain; its full sequence is Transcriptional regulator MraZ (143 aa).

SpoVT-AbrB domains are found at residues 5 to 47 and 76 to 119; these read THSP…TTRE and ANAE…DAGT.

This sequence belongs to the MraZ family. As to quaternary structure, forms oligomers.

It localises to the cytoplasm. It is found in the nucleoid. The polypeptide is Transcriptional regulator MraZ (Clavibacter michiganensis subsp. michiganensis (strain NCPPB 382)).